The primary structure comprises 36 residues: Cytochrome b6-f complex subunit 7 (36 aa).

The chain crosses the membrane as a helical span at residues 9–29; that stretch reads NGAFIMIGLTLLGLAWGFVII.

It belongs to the PetM family. The 4 large subunits of the cytochrome b6-f complex are cytochrome b6, subunit IV (17 kDa polypeptide, PetD), cytochrome f and the Rieske protein, while the 4 small subunits are PetG, PetL, PetM and PetN. The complex functions as a dimer.

Its subcellular location is the cellular thylakoid membrane. In terms of biological role, component of the cytochrome b6-f complex, which mediates electron transfer between photosystem II (PSII) and photosystem I (PSI), cyclic electron flow around PSI, and state transitions. The chain is Cytochrome b6-f complex subunit 7 from Synechocystis sp. (strain ATCC 27184 / PCC 6803 / Kazusa).